The chain runs to 1114 residues: TBC1 domain family member 8B (1114 aa).

2 consecutive GRAM domains span residues Leu145 to Ser212 and Glu285 to Asp353. A compositionally biased stretch (polar residues) spans Thr399–Ser411. The disordered stretch occupies residues Thr399–Thr420. The 188-residue stretch at Gly486–Gly673 folds into the Rab-GAP TBC domain. Residues Asn857–Gly892 enclose the EF-hand domain. Disordered stretches follow at residues Ser938–Lys957 and Leu1032–Pro1061. Residues Pro940–Lys957 are compositionally biased toward basic and acidic residues.

Interacts (via domain Rab-GAP TBC) with RAB11B (in GTP-bound form).

Its subcellular location is the cytoplasm. The protein resides in the cytosol. Involved in vesicular recycling, probably as a RAB11B GTPase-activating protein. This is TBC1 domain family member 8B (Tbc1d8b) from Mus musculus (Mouse).